The following is a 539-amino-acid chain: Kynureninase 2 (539 aa).

Residues 60 to 87 are disordered; the sequence is DGGVAGETKEPRVPNGVSSATKPNGTVN. The segment covering 75-87 has biased composition (polar residues); sequence GVSSATKPNGTVN. Residues L171, T172, 199-202, D290, H293, and Y315 contribute to the pyridoxal 5'-phosphate site; that span reads FPSD. The residue at position 316 (K316) is an N6-(pyridoxal phosphate)lysine. Over residues 340-352 the composition is skewed to gly residues; sequence GGGGSGGVGGGRG. Residues 340-363 form a disordered region; that stretch reads GGGGSGGVGGGRGEGGDGDGGDGG. Pyridoxal 5'-phosphate contacts are provided by W379 and N407.

The protein belongs to the kynureninase family. Homodimer. The cofactor is pyridoxal 5'-phosphate.

It localises to the cytoplasm. The catalysed reaction is L-kynurenine + H2O = anthranilate + L-alanine + H(+). It carries out the reaction 3-hydroxy-L-kynurenine + H2O = 3-hydroxyanthranilate + L-alanine + H(+). It functions in the pathway amino-acid degradation; L-kynurenine degradation; L-alanine and anthranilate from L-kynurenine: step 1/1. Its pathway is cofactor biosynthesis; NAD(+) biosynthesis; quinolinate from L-kynurenine: step 2/3. Its function is as follows. Catalyzes the cleavage of L-kynurenine (L-Kyn) and L-3-hydroxykynurenine (L-3OHKyn) into anthranilic acid (AA) and 3-hydroxyanthranilic acid (3-OHAA), respectively. The polypeptide is Kynureninase 2 (Chaetomium globosum (strain ATCC 6205 / CBS 148.51 / DSM 1962 / NBRC 6347 / NRRL 1970) (Soil fungus)).